Here is a 315-residue protein sequence, read N- to C-terminus: Transaldolase (315 aa).

Lys-131 functions as the Schiff-base intermediate with substrate in the catalytic mechanism.

Belongs to the transaldolase family. Type 1 subfamily. As to quaternary structure, homodimer.

It is found in the cytoplasm. It catalyses the reaction D-sedoheptulose 7-phosphate + D-glyceraldehyde 3-phosphate = D-erythrose 4-phosphate + beta-D-fructose 6-phosphate. It participates in carbohydrate degradation; pentose phosphate pathway; D-glyceraldehyde 3-phosphate and beta-D-fructose 6-phosphate from D-ribose 5-phosphate and D-xylulose 5-phosphate (non-oxidative stage): step 2/3. Its function is as follows. Transaldolase is important for the balance of metabolites in the pentose-phosphate pathway. The sequence is that of Transaldolase from Actinobacillus pleuropneumoniae serotype 3 (strain JL03).